Reading from the N-terminus, the 81-residue chain is Acyl carrier protein (81 aa).

The Carrier domain maps to 2–77 (ASVEEKVKQI…DAVDYITAHA (76 aa)). Position 37 is an O-(pantetheine 4'-phosphoryl)serine (S37).

Belongs to the acyl carrier protein (ACP) family. In terms of processing, 4'-phosphopantetheine is transferred from CoA to a specific serine of apo-ACP by AcpS. This modification is essential for activity because fatty acids are bound in thioester linkage to the sulfhydryl of the prosthetic group.

It localises to the cytoplasm. It functions in the pathway lipid metabolism; fatty acid biosynthesis. Carrier of the growing fatty acid chain in fatty acid biosynthesis. The chain is Acyl carrier protein from Koribacter versatilis (strain Ellin345).